The chain runs to 149 residues: UPF0178 protein Sama_3557 (149 aa).

It belongs to the UPF0178 family.

In Shewanella amazonensis (strain ATCC BAA-1098 / SB2B), this protein is UPF0178 protein Sama_3557.